A 1029-amino-acid chain; its full sequence is Toll-like receptor 9 (1029 aa).

The N-terminal stretch at Met1 to Ala24 is a signal peptide. Over Glu25–Asp815 the chain is Extracellular. A disulfide bridge connects residues Cys34 and Cys44. Trp46–Lys50 contributes to the DNA binding site. LRR repeat units follow at residues Arg61–His84, Ser86–Cys109, Val121–Ser146, Leu149–Leu165, His166–Val189, Leu197–Ser220, Asp222–Asn241, Leu242–Cys267, Leu282–Gly305, Gly307–Asp331, Leu332–Leu355, Leu362–Ser385, Leu389–Ala412, Pro414–Val439, Cys469–Arg492, Ser494–Pro517, Leu518–Glu541, Pro543–Ala570, Leu572–Ala596, Leu598–Cys620, Leu625–Asn648, Pro650–Val673, Leu674–Pro697, Ile699–Arg721, Ala722–Ser745, and Ala747–Asp770. N-linked (GlcNAc...) asparagine glycosylation occurs at Asn63. DNA contacts are provided by residues Ser71–His76 and Lys94–Pro108. Cys97 and Cys109 are disulfide-bonded. Asn128 carries an N-linked (GlcNAc...) asparagine glycan. DNA is bound at residue Tyr131. Cys177 and Cys183 are disulfide-bonded. Tyr178–Met180 contributes to the DNA binding site. N-linked (GlcNAc...) asparagine glycosylation is present at Asn199. Tyr207 contributes to the DNA binding site. N-linked (GlcNAc...) asparagine glycosylation is found at Asn209 and Asn241. 2 cysteine pairs are disulfide-bonded: Cys254–Cys267 and Cys257–Cys264. Cys257 is lipidated: S-palmitoyl cysteine. Residue Arg261 participates in DNA binding. Cys264 is lipidated: S-palmitoyl cysteine. Asn339 and Asn380 each carry an N-linked (GlcNAc...) asparagine glycan. Cys469 and Cys498 are joined by a disulfide. Residues Asn472 and Asn511 are each glycosylated (N-linked (GlcNAc...) asparagine). A glycan (N-linked (GlcNAc...) asparagine) is linked at Asn565. Residues Asn667 and Asn692 are each glycosylated (N-linked (GlcNAc...) asparagine). The N-linked (GlcNAc...) asparagine glycan is linked to Asn729. 2 cysteine pairs are disulfide-bonded: Cys762/Cys788 and Cys764/Cys807. A helical transmembrane segment spans residues Cys816 to Leu836. Residues Cys837–Glu1029 lie on the Cytoplasmic side of the membrane. The region spanning Leu864–Leu1009 is the TIR domain.

It belongs to the Toll-like receptor family. As to quaternary structure, monomer and homodimer. Exists as a monomer in the absence of unmethylated cytidine-phosphate-guanosine (CpG) ligand. Proteolytic processing of an insertion loop (Z-loop) is required for homodimerization upon binding to the unmethylated CpG ligand leading to its activation. Interacts with MYD88 via their respective TIR domains. Interacts with BTK. Interacts (via transmembrane domain) with UNC93B1. Interacts with CD300LH; the interaction may promote full activation of TLR9-triggered innate responses. Interacts with CNPY3 and HSP90B1; this interaction is required for proper folding in the endoplasmic reticulum. Interacts with SMPDL3B. Interacts with CD82; this interaction is essential for TLR9-dependent myddosome formation in response to CpG stimulation. Post-translationally, activated by proteolytic cleavage of the flexible loop between repeats LRR14 and LRR15 within the ectodomain. Cleavage requires UNC93B1. Proteolytically processed by first removing the majority of the ectodomain by either asparagine endopeptidase (AEP) or a cathepsin followed by a trimming event that is solely cathepsin mediated and required for optimal receptor signaling. In terms of processing, palmitoylated by ZDHHC3 in the Golgi regulates TLR9 trafficking from the Golgi to endosomes. Depalmitoylation by PPT1 controls the release of TLR9 from UNC93B1 in endosomes.

The protein localises to the endoplasmic reticulum membrane. Its subcellular location is the endosome. It is found in the lysosome. It localises to the cytoplasmic vesicle. The protein resides in the phagosome. Functionally, key component of innate and adaptive immunity. TLRs (Toll-like receptors) control host immune response against pathogens through recognition of molecular patterns specific to microorganisms. TLR9 is a nucleotide-sensing TLR which is activated by unmethylated cytidine-phosphate-guanosine (CpG) dinucleotides. Acts via MYD88 and TRAF6, leading to NF-kappa-B activation, cytokine secretion and the inflammatory response. Upon CpG stimulation, induces B-cell proliferation, activation, survival and antibody production. The sequence is that of Toll-like receptor 9 (TLR9) from Bos taurus (Bovine).